The chain runs to 859 residues: Leucine--tRNA ligase (859 aa).

Positions 42–52 (PYPSGRLHMGH) match the 'HIGH' region motif. The short motif at 618 to 622 (KMSKS) is the 'KMSKS' region element. An ATP-binding site is contributed by K621.

The protein belongs to the class-I aminoacyl-tRNA synthetase family.

It is found in the cytoplasm. The enzyme catalyses tRNA(Leu) + L-leucine + ATP = L-leucyl-tRNA(Leu) + AMP + diphosphate. The chain is Leucine--tRNA ligase from Shewanella amazonensis (strain ATCC BAA-1098 / SB2B).